Consider the following 260-residue polypeptide: Histidinol-phosphatase (260 aa).

Mg(2+) is bound by residues glutamate 67, aspartate 83, isoleucine 85, and aspartate 86. Glutamate 67 is a binding site for substrate. Substrate is bound by residues 85-88 (IDGT), arginine 185, and aspartate 213. Aspartate 213 serves as a coordination point for Mg(2+).

It belongs to the inositol monophosphatase superfamily. The cofactor is Mg(2+).

The enzyme catalyses L-histidinol phosphate + H2O = L-histidinol + phosphate. It functions in the pathway amino-acid biosynthesis; L-histidine biosynthesis; L-histidine from 5-phospho-alpha-D-ribose 1-diphosphate: step 8/9. Its function is as follows. Catalyzes the dephosphorylation of histidinol-phosphate to histidinol, the direct precursor of histidine. The sequence is that of Histidinol-phosphatase (hisN) from Mycobacterium tuberculosis (strain ATCC 25618 / H37Rv).